The following is a 324-amino-acid chain: MKPSVILYKALPDDLLQRLQEHFTVHQVANLSPQTVEQNAAIFAEAEGLLGSNENVDAALLEKMPKLRATSTISVGYDNFDVDALTARKILLMHTPTVLTETVADTLMALVLSTARRVVEVAERVKAGEWTASIGPDWYGTDVHHKTLGIVGMGRIGMALAQRAQFGFNMPILYNARRHHKEAEERFNARYCDLDTLLQESDFVCLILPLTDETHHLFGAEQFAKMKSSAIFINAGRGPVVDENALIAALQKGEIHAAGLDVFEQEPLSVDSPLLSMANVVAVPHIGSATHETRYGMAACAVDNLIDALQGKVEKNCVNPHVAD.

Residues R237 and E266 contribute to the active site. The active-site Proton donor is the H285.

This sequence belongs to the D-isomer specific 2-hydroxyacid dehydrogenase family. GhrB subfamily. In terms of assembly, homodimer.

The protein resides in the cytoplasm. The catalysed reaction is glycolate + NADP(+) = glyoxylate + NADPH + H(+). The enzyme catalyses (R)-glycerate + NAD(+) = 3-hydroxypyruvate + NADH + H(+). It carries out the reaction (R)-glycerate + NADP(+) = 3-hydroxypyruvate + NADPH + H(+). In terms of biological role, catalyzes the NADPH-dependent reduction of glyoxylate and hydroxypyruvate into glycolate and glycerate, respectively. The sequence is that of Glyoxylate/hydroxypyruvate reductase B from Escherichia coli (strain SMS-3-5 / SECEC).